The chain runs to 223 residues: Glutathione S-transferase U6 (223 aa).

The GST N-terminal domain maps to Glu5–Pro84. Residues Ser15–Pro16, Asn41–Lys42, Lys55–Ile56, and Glu68–Ser69 contribute to the glutathione site. The 128-residue stretch at Asp89 to Met216 folds into the GST C-terminal domain. At Thr150 the chain carries Phosphothreonine.

It belongs to the GST superfamily. Tau family.

It localises to the cytoplasm. The protein localises to the cytosol. It catalyses the reaction RX + glutathione = an S-substituted glutathione + a halide anion + H(+). May be involved in the conjugation of reduced glutathione to a wide number of exogenous and endogenous hydrophobic electrophiles and have a detoxification role against certain herbicides. This Arabidopsis thaliana (Mouse-ear cress) protein is Glutathione S-transferase U6 (GSTU6).